Reading from the N-terminus, the 156-residue chain is 3-hydroxyacyl-[acyl-carrier-protein] dehydratase FabZ (156 aa).

His-62 is an active-site residue.

The protein belongs to the thioester dehydratase family. FabZ subfamily.

The protein resides in the cytoplasm. The enzyme catalyses a (3R)-hydroxyacyl-[ACP] = a (2E)-enoyl-[ACP] + H2O. Its function is as follows. Involved in unsaturated fatty acids biosynthesis. Catalyzes the dehydration of short chain beta-hydroxyacyl-ACPs and long chain saturated and unsaturated beta-hydroxyacyl-ACPs. The sequence is that of 3-hydroxyacyl-[acyl-carrier-protein] dehydratase FabZ from Parasynechococcus marenigrum (strain WH8102).